The following is a 194-amino-acid chain: Small ribosomal subunit protein uS4 (194 aa).

At Lys-66 the chain carries N6-acetyllysine. Residue Lys-93 forms a Glycyl lysine isopeptide (Lys-Gly) (interchain with G-Cter in SUMO2) linkage. The region spanning 108 to 182 is the S4 RNA-binding domain; the sequence is RRLQTQVFKL…VKRKNAKKGQ (75 aa). At Lys-116 the chain carries N6-acetyllysine. Lys-139 is covalently cross-linked (Glycyl lysine isopeptide (Lys-Gly) (interchain with G-Cter in SUMO2)). The residue at position 153 (Ser-153) is a Phosphoserine. Lys-155 is modified (N6-acetyllysine). The interval 162-194 is disordered; it reads RSPYGGGRPGRVKRKNAKKGQGGAGAGDDEEED. At Ser-163 the chain carries Phosphoserine.

This sequence belongs to the universal ribosomal protein uS4 family. Component of the small ribosomal subunit. Part of the small subunit (SSU) processome, composed of more than 70 proteins and the RNA chaperone small nucleolar RNA (snoRNA) U3.

The protein resides in the cytoplasm. It localises to the nucleus. The protein localises to the nucleolus. Component of the small ribosomal subunit. The ribosome is a large ribonucleoprotein complex responsible for the synthesis of proteins in the cell. Part of the small subunit (SSU) processome, first precursor of the small eukaryotic ribosomal subunit. During the assembly of the SSU processome in the nucleolus, many ribosome biogenesis factors, an RNA chaperone and ribosomal proteins associate with the nascent pre-rRNA and work in concert to generate RNA folding, modifications, rearrangements and cleavage as well as targeted degradation of pre-ribosomal RNA by the RNA exosome. This chain is Small ribosomal subunit protein uS4 (RPS9), found in Papio anubis (Olive baboon).